The chain runs to 144 residues: 3-dehydroquinate dehydratase (144 aa).

Catalysis depends on Y24, which acts as the Proton acceptor. 3 residues coordinate substrate: N73, H79, and D86. The Proton donor role is filled by H99. Substrate contacts are provided by residues 100 to 101 (LS) and R110.

It belongs to the type-II 3-dehydroquinase family. In terms of assembly, homododecamer.

The enzyme catalyses 3-dehydroquinate = 3-dehydroshikimate + H2O. Its pathway is metabolic intermediate biosynthesis; chorismate biosynthesis; chorismate from D-erythrose 4-phosphate and phosphoenolpyruvate: step 3/7. Functionally, catalyzes a trans-dehydration via an enolate intermediate. The chain is 3-dehydroquinate dehydratase from Shewanella putrefaciens (strain CN-32 / ATCC BAA-453).